The sequence spans 522 residues: GMP synthase [glutamine-hydrolyzing] (522 aa).

The 200-residue stretch at 5-204 folds into the Glutamine amidotransferase type-1 domain; that stretch reads YILIIDFGSQ…VKNICNYTNV (200 aa). The active-site Nucleophile is cysteine 82. Active-site residues include histidine 178 and glutamate 180. The GMPS ATP-PPase domain maps to 205–397; the sequence is IKYSLSIRKI…IGIPKEIIFR (193 aa). 232-238 is an ATP binding site; the sequence is SGGIDSF.

In terms of assembly, homodimer.

It carries out the reaction XMP + L-glutamine + ATP + H2O = GMP + L-glutamate + AMP + diphosphate + 2 H(+). The protein operates within purine metabolism; GMP biosynthesis; GMP from XMP (L-Gln route): step 1/1. Its function is as follows. Catalyzes the synthesis of GMP from XMP. The sequence is that of GMP synthase [glutamine-hydrolyzing] from Wigglesworthia glossinidia brevipalpis.